The following is a 95-amino-acid chain: Bombyxin C-2 (95 aa).

Positions 1-19 (MKLVILLVVVSAMLVLGGA) are cleaved as a signal peptide. A Pyrrolidone carboxylic acid modification is found at Q20. Cystine bridges form between C27–C76, C39–C89, and C75–C80. Positions 47-67 (SGSQYAGYGWPWLPPFSSSRG) are cleaved as a propeptide — c peptide like.

This sequence belongs to the insulin family. In terms of assembly, heterodimer of a B chain and an A chain linked by two disulfide bonds.

The protein localises to the secreted. Brain peptide responsible for activation of prothoracic glands to produce ecdysone in insects. The protein is Bombyxin C-2 (BBXC2) of Bombyx mori (Silk moth).